An 88-amino-acid polypeptide reads, in one-letter code: Small ribosomal subunit protein uS15 (88 aa).

The protein belongs to the universal ribosomal protein uS15 family. As to quaternary structure, part of the 30S ribosomal subunit. Forms a bridge to the 50S subunit in the 70S ribosome, contacting the 23S rRNA.

One of the primary rRNA binding proteins, it binds directly to 16S rRNA where it helps nucleate assembly of the platform of the 30S subunit by binding and bridging several RNA helices of the 16S rRNA. Functionally, forms an intersubunit bridge (bridge B4) with the 23S rRNA of the 50S subunit in the ribosome. This chain is Small ribosomal subunit protein uS15, found in Mesomycoplasma hyopneumoniae (strain 232) (Mycoplasma hyopneumoniae).